We begin with the raw amino-acid sequence, 422 residues long: GTPase Obg (422 aa).

Residues 1–158 enclose the Obg domain; it reads MFYDRAKIYV…LWLELELKVI (158 aa). The region spanning 159–330 is the OBG-type G domain; that stretch reads ADVGLIGFPN…VIHRVAELLA (172 aa). Residues 165–172, 190–194, 212–215, 282–285, and 311–313 each bind GTP; these read GFPNAGKS, FTTLV, DIPG, NKMD, and SAA. Serine 172 and threonine 192 together coordinate Mg(2+). In terms of domain architecture, OCT spans 344–422; it reads VMFEPEERFN…IGDWEFEWSE (79 aa).

It belongs to the TRAFAC class OBG-HflX-like GTPase superfamily. OBG GTPase family. In terms of assembly, monomer. Mg(2+) is required as a cofactor.

Its subcellular location is the cytoplasm. In terms of biological role, an essential GTPase which binds GTP, GDP and possibly (p)ppGpp with moderate affinity, with high nucleotide exchange rates and a fairly low GTP hydrolysis rate. Plays a role in control of the cell cycle, stress response, ribosome biogenesis and in those bacteria that undergo differentiation, in morphogenesis control. The sequence is that of GTPase Obg from Desulforamulus reducens (strain ATCC BAA-1160 / DSM 100696 / MI-1) (Desulfotomaculum reducens).